A 147-amino-acid chain; its full sequence is uncharacterized protein (147 aa).

A disordered region spans residues 23-48 (EEVSQPEPNTANDSSTEYKGKSKDDF). Over residues 28-37 (PEPNTANDSS) the composition is skewed to polar residues. Over residues 38–48 (TEYKGKSKDDF) the composition is skewed to basic and acidic residues. A helical membrane pass occupies residues 85–105 (LMFCIIACSFICAIQFLFFII).

It is found in the membrane. This is an uncharacterized protein from Saccharomyces cerevisiae (strain ATCC 204508 / S288c) (Baker's yeast).